Reading from the N-terminus, the 210-residue chain is Chorismate pyruvate-lyase (210 aa).

This sequence belongs to the chorismate pyruvate-lyase type 2 family.

The catalysed reaction is chorismate = 4-hydroxybenzoate + pyruvate. Functionally, removes the pyruvyl group from chorismate to provide 4-hydroxybenzoate (4HB). Involved in the synthesis of glycosylated p-hydroxybenzoic acid methyl esters (p-HBADs) and phenolic glycolipids (PGL) that play important roles in the pathogenesis of mycobacterial infections. In Mycobacterium leprae (strain TN), this protein is Chorismate pyruvate-lyase.